A 206-amino-acid polypeptide reads, in one-letter code: Large ribosomal subunit protein uL3 (206 aa).

The tract at residues 122 to 154 is disordered; sequence VVKRHGHAGGPGGHGSRFHRHPGSMGANSTPSR.

It belongs to the universal ribosomal protein uL3 family. In terms of assembly, part of the 50S ribosomal subunit. Forms a cluster with proteins L14 and L19.

Its function is as follows. One of the primary rRNA binding proteins, it binds directly near the 3'-end of the 23S rRNA, where it nucleates assembly of the 50S subunit. The polypeptide is Large ribosomal subunit protein uL3 (Leptospira borgpetersenii serovar Hardjo-bovis (strain JB197)).